The chain runs to 238 residues: MGRAFQNRKESMAKTSDQKAKVYSKYGREIYVCAKSGGIDPNGNLALRSLIDRAKKDQVPTHVIDKAIDKAKGGGGEDFDTARYEGFGPGNTMVIVDCLSDNPNRTFGDVRTCFNKVKCKIGSQGSVSHMFDHSAIFVFAGTDEEAVLEALMMADVDVTDIELEDGKVTVFAPHTDYSKAKTALTDAFGEIEFEVDEIQFVAQNTTEIQGEEVEQFDRFLDLLNDLDDVQRVYHNAEY.

The protein belongs to the TACO1 family.

The protein localises to the cytoplasm. This chain is Probable transcriptional regulatory protein Mmwyl1_2868, found in Marinomonas sp. (strain MWYL1).